A 1317-amino-acid chain; its full sequence is Kinesin-like protein KIF16B (1317 aa).

Positions Ser3–Ile358 constitute a Kinesin motor domain. Position 102-109 (Gly102–Ser109) interacts with ATP. A coiled-coil region spans residues Val370–Lys425. Ser398 bears the Phosphoserine mark. An FHA domain is found at Thr478–Ile529. At Thr577 the chain carries Phosphothreonine. Ser582 is subject to Phosphoserine. 2 coiled-coil regions span residues Gly595–Val882 and Leu936–Asp1087. Residues Leu1036–Gly1048 are compositionally biased toward polar residues. Residues Leu1036–Gln1057 are disordered. Position 1052 is a phosphoserine (Ser1052). One can recognise a PX domain in the interval Asp1182–Thr1296.

This sequence belongs to the TRAFAC class myosin-kinesin ATPase superfamily. Kinesin family. Interacts with RAB14. Interacts with PTPN21. In terms of tissue distribution, primarily expressed in brain. Also present in kidney, liver, intestine, placenta, leukocytes, heart and skeletal muscle (at protein level).

It is found in the cytoplasm. The protein localises to the cytoskeleton. Its subcellular location is the early endosome membrane. The protein resides in the spindle. Plus end-directed microtubule-dependent motor protein involved in endosome transport and receptor recycling and degradation. Regulates the plus end motility of early endosomes and the balance between recycling and degradation of receptors such as EGF receptor (EGFR) and FGF receptor (FGFR). Regulates the Golgi to endosome transport of FGFR-containing vesicles during early development, a key process for developing basement membrane and epiblast and primitive endoderm lineages during early postimplantation development. This Homo sapiens (Human) protein is Kinesin-like protein KIF16B (KIF16B).